We begin with the raw amino-acid sequence, 255 residues long: Shieldin complex subunit 3 (255 aa).

The sufficient for interaction with MAD2L2 stretch occupies residues 33 to 88; the sequence is QDFPTHPLPRFIPWFPYDESKLPLKPERLPPVISEEAAESVKQYLAISEPGVKSQS. Residues 116 to 135 form a disordered region; it reads QTNAAHLDKNSGKEKQHKQR.

As to quaternary structure, component of the shieldin complex, consisting of SHLD1, SHLD2, SHLD3 and MAD2L2/REV7. Within the complex, SHLD2 forms a scaffold which interacts with a SHLD3-MAD2L2 subcomplex via its N-terminus, and with SHLD1 via its C-terminus. Interacts with ASTE1.

Its subcellular location is the chromosome. In terms of biological role, component of the shieldin complex, which plays an important role in repair of DNA double-stranded breaks (DSBs). During G1 and S phase of the cell cycle, the complex functions downstream of TP53BP1 to promote non-homologous end joining (NHEJ) and suppress DNA end resection. Mediates various NHEJ-dependent processes including immunoglobulin class-switch recombination, and fusion of unprotected telomeres. This chain is Shieldin complex subunit 3, found in Mus musculus (Mouse).